We begin with the raw amino-acid sequence, 345 residues long: Dihydroorotase (345 aa).

Zn(2+) contacts are provided by His13 and His15. Residues 15-17 and Asn41 each bind substrate; that span reads HFR. Zn(2+) is bound by residues Lys98, His135, and His173. Lys98 carries the post-translational modification N6-carboxylysine. His135 is a substrate binding site. Leu218 is a binding site for substrate. Asp246 provides a ligand contact to Zn(2+). Asp246 is a catalytic residue. Substrate contacts are provided by His250 and Ala262.

Belongs to the metallo-dependent hydrolases superfamily. DHOase family. Class II DHOase subfamily. In terms of assembly, homodimer. Requires Zn(2+) as cofactor.

It carries out the reaction (S)-dihydroorotate + H2O = N-carbamoyl-L-aspartate + H(+). The protein operates within pyrimidine metabolism; UMP biosynthesis via de novo pathway; (S)-dihydroorotate from bicarbonate: step 3/3. Catalyzes the reversible cyclization of carbamoyl aspartate to dihydroorotate. This chain is Dihydroorotase, found in Shewanella piezotolerans (strain WP3 / JCM 13877).